Reading from the N-terminus, the 453-residue chain is D-aminoacyl-tRNA deacylase (453 aa).

The interval 428 to 453 (VRADVALHERPRERVRRPSDDEGKGN) is disordered.

The protein belongs to the DtdA deacylase family. As to quaternary structure, monomer. Requires Zn(2+) as cofactor.

It catalyses the reaction a D-aminoacyl-tRNA + H2O = a tRNA + a D-alpha-amino acid + H(+). The enzyme catalyses glycyl-tRNA(Ala) + H2O = tRNA(Ala) + glycine + H(+). Functionally, D-aminoacyl-tRNA deacylase with broad substrate specificity. By recycling D-aminoacyl-tRNA to D-amino acids and free tRNA molecules, this enzyme counteracts the toxicity associated with the formation of D-aminoacyl-tRNA entities in vivo. This Halobacterium salinarum (strain ATCC 29341 / DSM 671 / R1) protein is D-aminoacyl-tRNA deacylase.